Reading from the N-terminus, the 267-residue chain is 4-hydroxy-tetrahydrodipicolinate reductase (267 aa).

NAD(+) contacts are provided by residues 8–13 (GAAGRM) and D34. Position 35 (R35) interacts with NADP(+). NAD(+)-binding positions include 98–100 (GTT) and 122–125 (AANF). The Proton donor/acceptor role is filled by H155. (S)-2,3,4,5-tetrahydrodipicolinate is bound at residue H156. K159 (proton donor) is an active-site residue. 165-166 (GT) contributes to the (S)-2,3,4,5-tetrahydrodipicolinate binding site.

It belongs to the DapB family.

The protein resides in the cytoplasm. It carries out the reaction (S)-2,3,4,5-tetrahydrodipicolinate + NAD(+) + H2O = (2S,4S)-4-hydroxy-2,3,4,5-tetrahydrodipicolinate + NADH + H(+). The enzyme catalyses (S)-2,3,4,5-tetrahydrodipicolinate + NADP(+) + H2O = (2S,4S)-4-hydroxy-2,3,4,5-tetrahydrodipicolinate + NADPH + H(+). Its pathway is amino-acid biosynthesis; L-lysine biosynthesis via DAP pathway; (S)-tetrahydrodipicolinate from L-aspartate: step 4/4. Catalyzes the conversion of 4-hydroxy-tetrahydrodipicolinate (HTPA) to tetrahydrodipicolinate. The polypeptide is 4-hydroxy-tetrahydrodipicolinate reductase (Pseudomonas putida (strain ATCC 47054 / DSM 6125 / CFBP 8728 / NCIMB 11950 / KT2440)).